The sequence spans 375 residues: Squamosa promoter-binding-like protein 9 (375 aa).

Disordered stretches follow at residues 1–30 and 43–73; these read MEMG…SFSG and GGGG…QIPR. Residues 18–30 show a composition bias toward low complexity; that stretch reads SGGSSTESSSFSG. Residues 71-148 form an SBP-type zinc finger; sequence IPRCQVEGCG…AGHNERRRKP (78 aa). Zn(2+) is bound by residues cysteine 74, cysteine 79, cysteine 96, histidine 99, cysteine 115, cysteine 118, histidine 122, and cysteine 134. Residues 131–147 carry the Bipartite nuclear localization signal motif; that stretch reads KRSCRRRLAGHNERRRK. Disordered stretches follow at residues 252 to 278 and 345 to 375; these read LLSN…NTWR and SDHH…NWSL. A compositionally biased stretch (low complexity) spans 262 to 275; it reads NNNNNNNNNNNNNN. Basic and acidic residues predominate over residues 345-362; that stretch reads SDHHHQSRRQYMEDENTR. The segment covering 363 to 375 has biased composition (polar residues); sequence AYDSSSHHTNWSL.

Zn(2+) serves as cofactor.

The protein resides in the nucleus. Its subcellular location is the cytoplasm. Its function is as follows. Trans-acting factor that binds specifically to the consensus nucleotide sequence 5'-TNCGTACAA-3'. The protein is Squamosa promoter-binding-like protein 9 (SPL9) of Arabidopsis thaliana (Mouse-ear cress).